The sequence spans 323 residues: Coiled-coil domain-containing protein 160 (323 aa).

The segment at 1–81 (MDARRKHWKD…EGEQDSNLRE (81 aa)) is disordered. A compositionally biased stretch (polar residues) spans 48–58 (SNFSVRNTQEG). The stretch at 144 to 289 (LRLHLLNEEL…IKNELRVEKT (146 aa)) forms a coiled coil.

Belongs to the CCDC160 family.

This chain is Coiled-coil domain-containing protein 160 (Ccdc160), found in Mus musculus (Mouse).